Consider the following 102-residue polypeptide: Large ribosomal subunit protein bL28 (102 aa).

The segment covering 1 to 20 (MSNSCDLTGHGWQNGNMVSH) has biased composition (polar residues). The interval 1–27 (MSNSCDLTGHGWQNGNMVSHSNRKTKK) is disordered.

It belongs to the bacterial ribosomal protein bL28 family.

This is Large ribosomal subunit protein bL28 from Neorickettsia sennetsu (strain ATCC VR-367 / Miyayama) (Ehrlichia sennetsu).